A 237-amino-acid chain; its full sequence is Purine nucleoside phosphorylase DeoD-type (237 aa).

H4 provides a ligand contact to a purine D-ribonucleoside. Phosphate is bound by residues G20, R24, R43, and 87-90; that span reads RVGT. A purine D-ribonucleoside is bound by residues 179 to 181 and 203 to 204; these read EME and SD. The active-site Proton donor is the D204.

This sequence belongs to the PNP/UDP phosphorylase family. Homohexamer; trimer of homodimers.

It catalyses the reaction a purine D-ribonucleoside + phosphate = a purine nucleobase + alpha-D-ribose 1-phosphate. It carries out the reaction a purine 2'-deoxy-D-ribonucleoside + phosphate = a purine nucleobase + 2-deoxy-alpha-D-ribose 1-phosphate. Its function is as follows. Catalyzes the reversible phosphorolytic breakdown of the N-glycosidic bond in the beta-(deoxy)ribonucleoside molecules, with the formation of the corresponding free purine bases and pentose-1-phosphate. This is Purine nucleoside phosphorylase DeoD-type from Streptococcus pyogenes serotype M5 (strain Manfredo).